The chain runs to 426 residues: Tol-Pal system protein TolB (426 aa).

Positions 1 to 25 (MNAMSRISRRIFLALALSLAGLAQA) are cleaved as a signal peptide.

Belongs to the TolB family. As to quaternary structure, the Tol-Pal system is composed of five core proteins: the inner membrane proteins TolA, TolQ and TolR, the periplasmic protein TolB and the outer membrane protein Pal. They form a network linking the inner and outer membranes and the peptidoglycan layer.

It is found in the periplasm. Functionally, part of the Tol-Pal system, which plays a role in outer membrane invagination during cell division and is important for maintaining outer membrane integrity. The chain is Tol-Pal system protein TolB from Dechloromonas aromatica (strain RCB).